The sequence spans 436 residues: GTPase Der (436 aa).

EngA-type G domains follow at residues 4–167 and 175–351; these read PTIA…PAQE and IKFS…ESQN. Residues 10-17, 57-61, 119-122, 181-188, 229-233, and 294-297 contribute to the GTP site; these read GRPNVGKS, DTGGI, NKVD, DTAGM, and NKWD. Positions 352–436 constitute a KH-like domain; it reads TRIPSAVLND…PIHLIARKRK (85 aa).

It belongs to the TRAFAC class TrmE-Era-EngA-EngB-Septin-like GTPase superfamily. EngA (Der) GTPase family. Associates with the 50S ribosomal subunit.

Functionally, GTPase that plays an essential role in the late steps of ribosome biogenesis. The polypeptide is GTPase Der (Streptococcus suis (strain 98HAH33)).